Consider the following 237-residue polypeptide: Glutathione S-transferase psoE (237 aa).

Residues 2 to 79 form the GST N-terminal domain; sequence VFGTLYTFPG…YITSQNEQTT (78 aa). 6 residues coordinate glutathione: Arg-37, Lys-49, Val-50, Glu-63, Cys-64, and Asn-99. Lys-49 serves as a coordination point for substrate. Residues 84–222 enclose the GST C-terminal domain; the sequence is DKKEYAEIIK…NNPPEKKPET (139 aa). A substrate-binding site is contributed by Gln-108. Basic and acidic residues predominate over residues 208-222; the sequence is EPKLTNNPPEKKPET. Positions 208 to 237 are disordered; sequence EPKLTNNPPEKKPETVPKNGAAVAIEATQA.

The protein belongs to the GST superfamily. Requires glutathione as cofactor.

Its pathway is secondary metabolite biosynthesis. Functionally, glutathione S-transferase; part of the gene cluster that mediates the biosynthesis of pseurotin A, a competitive inhibitor of chitin synthase and an inducer of nerve-cell proliferation. The PKS-NRPS hybrid synthetase psoA is responsible for the biosynthesis of azaspirene, one of the first intermediates having the 1-oxa-7-azaspiro[4,4]-non-2-ene-4,6-dione core of pseurotin, via condensation of one acetyl-CoA, 4 malonyl-CoA, and a L-phenylalanine molecule. The dual-functional monooxygenase/methyltransferase psoF seems to be involved in the addition of the C3 methyl group onto the pseurotin scaffold. Azaspirene is then converted to synerazol through 4 steps including oxidation of C17 by the cytochrome P450 monooxygenase psoD, O-methylation of the hydroxy group of C8 by the methyltransferase psoC, and the trans-to-cis isomerization of the C13 olefin by the glutathione S-transferase psoE. The fourth step of synerazol production is performed by the dual-functional monooxygenase/methyltransferase psoF which seems to catalyze the epoxidation of the intermediate deepoxy-synerazol. Synerazol can be attacked by a water molecule nonenzymatically at two different positions to yield two diol products, pseurotin A and pseurotin D. In Aspergillus fumigatus (strain ATCC MYA-4609 / CBS 101355 / FGSC A1100 / Af293) (Neosartorya fumigata), this protein is Glutathione S-transferase psoE.